The primary structure comprises 25 residues: Soybean toxin 27 kDa chain (25 aa).

In terms of assembly, heterodimer of a 27 kDa subunit and a 17 kDa subunit; disulfide-linked. SBTX is known to be glycosylated but it is not known which one of its two subunits is modified; contains 5% carbohydrates. In terms of tissue distribution, expressed in seeds, leaves, roots and stem (at protein level).

Functionally, involved in plant defense. Inhibits spore germination in C.sojina, A.niger (at concentrations &gt;50 ug/ml) and P.herguei but not in F.oxysporum and F.solani. Does not inhibit vegetative mycelial growth. Inhibits growth of C.albicans and K.marxiannus but not P.membranifaciens or C.parapsilosis. Probably acts by affecting the cell membrane. Does not have urease, chitinase, beta-1,3-glucanase or hemagglutination activities. Does not inhibit trypsin. Injection into mice produces toxic effects such as dyspnea, tonic-clonic convulsion and death. The polypeptide is Soybean toxin 27 kDa chain (Glycine max (Soybean)).